Consider the following 183-residue polypeptide: Peptide deformylase (183 aa).

Positions 110 and 153 each coordinate Fe cation. The active site involves Glu-154. His-157 serves as a coordination point for Fe cation.

This sequence belongs to the polypeptide deformylase family. Requires Fe(2+) as cofactor.

The enzyme catalyses N-terminal N-formyl-L-methionyl-[peptide] + H2O = N-terminal L-methionyl-[peptide] + formate. In terms of biological role, removes the formyl group from the N-terminal Met of newly synthesized proteins. Requires at least a dipeptide for an efficient rate of reaction. N-terminal L-methionine is a prerequisite for activity but the enzyme has broad specificity at other positions. This chain is Peptide deformylase, found in Listeria monocytogenes serotype 4b (strain CLIP80459).